A 140-amino-acid chain; its full sequence is Protein NrdI (140 aa).

The protein belongs to the NrdI family.

Probably involved in ribonucleotide reductase function. The protein is Protein NrdI of Ruegeria sp. (strain TM1040) (Silicibacter sp.).